A 175-amino-acid polypeptide reads, in one-letter code: MFTSKPAFKIKNKASKSYRNTAVSKKLKEKRLAEHVRPSCFNIIRPLKKDIQIPVPSSRFLNKIQIHRIASGSQNTQFRQFNKTSIKSSKKYLNSFMAFRAYYSQFGSGVKQNVLSSLLAEEWHADKMQHGIWDYFAQQYNFINPGFGFVEWLTNNYAEVRGDGYWEDVFVHLAL.

A DNA-binding region (alpha box) is located at residues 88–144 (SSKKYLNSFMAFRAYYSQFGSGVKQNVLSSLLAEEWHADKMQHGIWDYFAQQYNFIN).

It belongs to the MATALPHA1 family. As to quaternary structure, binds DNA with a high specificity in complex with an MCM1 dimer. Interacts with STE12.

Its subcellular location is the nucleus. Functionally, mating type proteins are sequence specific DNA-binding proteins that act as master switches in yeast differentiation by controlling gene expression in a cell type-specific fashion. Transcriptional coactivator that, in alpha-cells, binds cooperatively with MCM1 and STE12 to a DNA sequence termed the QP' element, to activate the transcription of alpha-specific genes. In Saccharomyces cerevisiae (strain ATCC 204508 / S288c) (Baker's yeast), this protein is Mating-type protein ALPHA1 (MATALPHA1).